We begin with the raw amino-acid sequence, 89 residues long: Small ribosomal subunit protein uS15 (89 aa).

Belongs to the universal ribosomal protein uS15 family. Part of the 30S ribosomal subunit. Forms a bridge to the 50S subunit in the 70S ribosome, contacting the 23S rRNA.

One of the primary rRNA binding proteins, it binds directly to 16S rRNA where it helps nucleate assembly of the platform of the 30S subunit by binding and bridging several RNA helices of the 16S rRNA. Functionally, forms an intersubunit bridge (bridge B4) with the 23S rRNA of the 50S subunit in the ribosome. The sequence is that of Small ribosomal subunit protein uS15 from Cellvibrio japonicus (strain Ueda107) (Pseudomonas fluorescens subsp. cellulosa).